Consider the following 175-residue polypeptide: Adenine phosphoribosyltransferase (175 aa).

Belongs to the purine/pyrimidine phosphoribosyltransferase family. Homodimer.

The protein localises to the cytoplasm. The catalysed reaction is AMP + diphosphate = 5-phospho-alpha-D-ribose 1-diphosphate + adenine. It functions in the pathway purine metabolism; AMP biosynthesis via salvage pathway; AMP from adenine: step 1/1. In terms of biological role, catalyzes a salvage reaction resulting in the formation of AMP, that is energically less costly than de novo synthesis. This Lactobacillus gasseri (strain ATCC 33323 / DSM 20243 / BCRC 14619 / CIP 102991 / JCM 1131 / KCTC 3163 / NCIMB 11718 / NCTC 13722 / AM63) protein is Adenine phosphoribosyltransferase.